Consider the following 136-residue polypeptide: Small nuclear ribonucleoprotein Sm D3 (136 aa).

Positions 6–78 constitute a Sm domain; it reads VPIKILHEAE…IRFMILPDML (73 aa). Residues 98–136 are disordered; the sequence is GLGGLDQRGRGRGTAFRRPMGRGGPRGMSRPGGAPTFRG.

This sequence belongs to the snRNP core protein family.

It localises to the nucleus. Its subcellular location is the cytoplasm. It is found in the cytosol. In terms of biological role, plays a role in pre-mRNA splicing as a core component of the spliceosomal U1, U2, U4 and U5 small nuclear ribonucleoproteins (snRNPs), the building blocks of the spliceosome. This is Small nuclear ribonucleoprotein Sm D3 (snr-1) from Caenorhabditis elegans.